The following is a 219-amino-acid chain: Cytidylate kinase (219 aa).

Residue 21 to 29 coordinates ATP; the sequence is GPAASGKGT.

This sequence belongs to the cytidylate kinase family. Type 1 subfamily.

The protein resides in the cytoplasm. The enzyme catalyses CMP + ATP = CDP + ADP. It catalyses the reaction dCMP + ATP = dCDP + ADP. This Rickettsia felis (strain ATCC VR-1525 / URRWXCal2) (Rickettsia azadi) protein is Cytidylate kinase.